Reading from the N-terminus, the 262-residue chain is MSEFEKIVRDIVFDSPPEEISLVYDNLQVLSDGQSKQQIASIIQEFNEKHRVPAAKGEERYLVSEYNKSGSKYFDPVNKVLFAVDHITREASDIEEYTSEDATQVQSDLYDELSKYVSNFFPDTAVFNVFKIPESDQYAIIVVSNKKSLGDFWTGYWLSEYVYDVDGDTISGEVSVDAHYFEDGNVRFKSTASLESAQTDSPIVSIKQFENEFEKNLINKFQYMNETQFKGLRRRLPVTRAKINWGQGIGNYRLGRDAAQGA.

It belongs to the F-actin-capping protein alpha subunit family. In terms of assembly, heterodimer of an alpha and a beta subunit.

Its function is as follows. F-actin-capping proteins bind in a Ca(2+)-independent manner to the fast growing ends of actin filaments (barbed end) thereby blocking the exchange of subunits at these ends. Unlike other capping proteins (such as gelsolin and severin), these proteins do not sever actin filaments. The chain is F-actin-capping protein subunit alpha (CAP1) from Kluyveromyces lactis (strain ATCC 8585 / CBS 2359 / DSM 70799 / NBRC 1267 / NRRL Y-1140 / WM37) (Yeast).